A 291-amino-acid chain; its full sequence is MAGMKEIRGKIKSVQNTRKITKAMEMVAASKMRRAQERMRAARPYAEKVRAIAAHMSRANPEYRHPFMVANEGVKTAGMILVTTDKGLCGGLNTNVLRASLQKFKELEEKGQKVEATAIGGKGLGFLNRFGAKVISQVVHLGDTPHLDKLIGAVKTQLDLYSEGRLSAVYLAYTRFVNTMKQETVIEQLLPLSSEHFDANDGTPATSWDYIYEPDAQAVVDELLVRYVEALVYQAVAENMASEQSARMVAMKAASDNAKTVISELQLSYNKSRQAAITKELSEIVGGAAAV.

This sequence belongs to the ATPase gamma chain family. In terms of assembly, F-type ATPases have 2 components, CF(1) - the catalytic core - and CF(0) - the membrane proton channel. CF(1) has five subunits: alpha(3), beta(3), gamma(1), delta(1), epsilon(1). CF(0) has three main subunits: a, b and c.

It is found in the cell inner membrane. Its function is as follows. Produces ATP from ADP in the presence of a proton gradient across the membrane. The gamma chain is believed to be important in regulating ATPase activity and the flow of protons through the CF(0) complex. In Burkholderia thailandensis (strain ATCC 700388 / DSM 13276 / CCUG 48851 / CIP 106301 / E264), this protein is ATP synthase gamma chain.